Here is a 465-residue protein sequence, read N- to C-terminus: Pancreatic triacylglycerol lipase (465 aa).

An N-terminal signal peptide occupies residues 1–16 (MLLVWSLALLLGAVAG). Disulfide bonds link C20–C26 and C107–C118. Residue S169 is the Nucleophile of the active site. D193 acts as the Charge relay system in catalysis. The Ca(2+) site is built by E204, R207, D209, and D212. C254 and C278 form a disulfide bridge. H280 functions as the Charge relay system in the catalytic mechanism. Cystine bridges form between C302/C313, C316/C321, and C449/C465. One can recognise a PLAT domain in the interval 355–465 (WRYKVSVTLS…EDVLLTLNAC (111 aa)).

Belongs to the AB hydrolase superfamily. Lipase family. In terms of assembly, forms a 1:1 stoichiometric complex with (pro)colipase/CLPS. As to expression, expressed in many tissues with highest expression in liver. During hibernation there is a significant increases in expression in heart, white adipose tissue (WAT), and testis; but not in pancreas.

The protein localises to the secreted. The enzyme catalyses a triacylglycerol + H2O = a diacylglycerol + a fatty acid + H(+). It carries out the reaction 1,2,3-tributanoylglycerol + H2O = dibutanoylglycerol + butanoate + H(+). The catalysed reaction is 1,2,3-tri-(9Z-octadecenoyl)-glycerol + H2O = di-(9Z)-octadecenoylglycerol + (9Z)-octadecenoate + H(+). It catalyses the reaction all-trans-retinyl hexadecanoate + H2O = all-trans-retinol + hexadecanoate + H(+). The enzyme catalyses 1,2-di-(9Z-octadecenoyl)-glycerol + H2O = (9Z-octadecenoyl)-glycerol + (9Z)-octadecenoate + H(+). With respect to regulation, inhibited by bile salts, is reactivated by (pro)colipase/CLPS. Plays an important role in fat metabolism. It preferentially splits the esters of long-chain fatty acids at positions 1 and 3, producing mainly 2-monoacylglycerol and free fatty acids, and shows considerably higher activity against insoluble emulsified substrates than against soluble ones. Plays a role in hibernation as a key enzyme that shows high activity at low temperatures. When expressed in the hibernating heart it liberates fatty acids from triglycerides at temperatures as low as 0 degrees Celsius. The chain is Pancreatic triacylglycerol lipase (PNLIP) from Ictidomys tridecemlineatus (Thirteen-lined ground squirrel).